A 733-amino-acid polypeptide reads, in one-letter code: Forkhead box protein K1 (733 aa).

Residue alanine 2 is modified to N-acetylalanine. The segment at 2–40 is interaction with SIN3A and SIN3B; that stretch reads AEVGEDSGARALLALRSAPCSPVLCAAAAAAAFPAAAPP. Residues 36-79 are disordered; it reads AAAPPPAPAQPQPPPGPPPPPPPPLPPGAIAGAGSSGGSSGVSG. A compositionally biased stretch (pro residues) spans 37–62; sequence AAPPPAPAQPQPPPGPPPPPPPPLPP. The required for interaction with FOXO4 and MEF2C stretch occupies residues 95 to 420; the sequence is AASVRQSPGP…PLSSRSAPAS (326 aa). Phosphoserine is present on serine 101. Residues 123 to 175 form the FHA domain; the sequence is VTIGRNSSQGSVDLSMGLSSFISRRHLQLSFQEPHFYLRCLGKNGVFVDGAFQ. Omega-N-methylarginine occurs at positions 161 and 191. A phosphoserine mark is found at serine 213, serine 223, serine 239, and serine 243. Threonine 245 and threonine 247 each carry phosphothreonine. Phosphoserine occurs at positions 253, 257, 295, and 299. 2 disordered regions span residues 287-306 and 413-436; these read ASEQ…ESKP and SSRS…GLQT. Residues 305–400 constitute a DNA-binding region (fork-head); the sequence is KPPFSYAQLI…EQAFRKRRQR (96 aa). Phosphoserine occurs at positions 416 and 420. Threonine 422 is modified (phosphothreonine). Serine 428 bears the Phosphoserine mark. Position 436 is a phosphothreonine (threonine 436). Phosphoserine occurs at positions 441, 445, and 459. A compositionally biased stretch (low complexity) spans 676 to 697; it reads VAATATTTPATATTASASASST. The disordered stretch occupies residues 676–733; the sequence is VAATATTTPATATTASASASSTGEPEVKRSRVEEPSGAVTTPAGVIAAAGPQGPGTGE. A compositionally biased stretch (basic and acidic residues) spans 700-709; it reads PEVKRSRVEE.

As to quaternary structure, interacts with SIN3A and SIN3B (via PAH2) to form a complex which represses transcription. Component of SIN3A-, but not SIN3B-, containing multiprotein complexes. Interacts with FOXO4 and MEF2C; both interactions inhibit FOXO4 and MEF2C transactivation activity. Interacts (when phosphorylated) with YWHAE/14-3-3-epsilon; promotes sequestration in the cytoplasm and leads to impaired ability to bind DNA. Interacts with FHL2. Interacts with SRF. Interacts with DVL2 and DVL3; the interaction induces DVL2 nuclear translocation. Interacts with BAP1 (when phosphorylated). Accessory component of the polycomb repressive deubiquitinase (PR-DUB) complex, at least composed of BAP1, one of ASXL1, ASXL2 or (probably) ASXL3 and one of MBD5 or MBD6. The PR-DUB core associates with a number of accessory proteins, including FOXK1, FOXK2, KDM1B, HCFC1 and OGT. In terms of processing, phosphorylation by GSK3 (GSK3A or GSK3B) promotes interaction with YWHAE/14-3-3-epsilon and retention in the cytoplasm. In response to mTORC1 signaling, phosphorylation by GSK3 is prevented, leading to translocation to the nucleus. Expressed both developing and adult tissues. In adults, significant expression is seen in tumors of the brain, colon and lymph node.

It is found in the nucleus. The protein resides in the cytoplasm. Its function is as follows. Transcriptional regulator involved in different processes such as glucose metabolism, aerobic glycolysis, muscle cell differentiation and autophagy. Recognizes and binds the forkhead DNA sequence motif (5'-GTAAACA-3') and can both act as a transcription activator or repressor, depending on the context. Together with FOXK2, acts as a key regulator of metabolic reprogramming towards aerobic glycolysis, a process in which glucose is converted to lactate in the presence of oxygen. Acts by promoting expression of enzymes for glycolysis (such as hexokinase-2 (HK2), phosphofructokinase, pyruvate kinase (PKLR) and lactate dehydrogenase), while suppressing further oxidation of pyruvate in the mitochondria by up-regulating pyruvate dehydrogenase kinases PDK1 and PDK4. Probably plays a role in gluconeogenesis during overnight fasting, when lactate from white adipose tissue and muscle is the main substrate. Involved in mTORC1-mediated metabolic reprogramming: in response to mTORC1 signaling, translocates into the nucleus and regulates the expression of genes associated with glycolysis and downstream anabolic pathways, such as HIF1A, thereby regulating glucose metabolism. Together with FOXK2, acts as a negative regulator of autophagy in skeletal muscle: in response to starvation, enters the nucleus, binds the promoters of autophagy genes and represses their expression, preventing proteolysis of skeletal muscle proteins. Acts as a transcriptional regulator of the myogenic progenitor cell population in skeletal muscle. Binds to the upstream enhancer region (CCAC box) of myoglobin (MB) gene, regulating the myogenic progenitor cell population. Promotes muscle progenitor cell proliferation by repressing the transcriptional activity of FOXO4, thereby inhibiting myogenic differentiation. Involved in remodeling processes of adult muscles that occur in response to physiological stimuli. Required to correct temporal orchestration of molecular and cellular events necessary for muscle repair. Represses myogenic differentiation by inhibiting MEFC activity. Positively regulates Wnt/beta-catenin signaling by translocating DVL into the nucleus. Reduces virus replication, probably by binding the interferon stimulated response element (ISRE) to promote antiviral gene expression. Accessory component of the polycomb repressive deubiquitinase (PR-DUB) complex; recruits the PR-DUB complex to specific FOXK1-bound genes. This is Forkhead box protein K1 from Homo sapiens (Human).